A 499-amino-acid chain; its full sequence is MINKKISLGVLSILTAFSLQSVSYACTGFIIGKDLTKDGSLLYGRTEDLEPHHNKNFIVRLAKDNPAGEKWKDLSNGFEYPLPEHSYRYSAIPDVTPNKGVYDEAGFNECGVSMSATVSASANDAIQKIDPYVKNGLAESSMASVILPSVKTAREGVALIAKIVTEKGAAEGNIVTLADKDGIWYMEILSGHQYVAIKFPDDKYAVFPNTFYLGHVDFNDKENTIASEDVEKVAKKAKSYIEVDGKFHIAKSYNPPLNDANRSRSFSGIKSLDPDSKVTYKDSNYELLQSTDKTFSLEDAMKLQRNRFEGLDLKPLDQMALDGKGKPKSKKAVKGYAYPISNPNVMEAHIFQLKKDIPAELGGGVMWLSIGSPRNAPYLPYLGNISRTYEAYQEKSTQYNDKSWYWTVSHINDLVAAHPKPFGTKVIDEMKGLEKTWIAEQDKSTKEISDLVVSDPKAAQEKADKISLDRAEKTFKRLKAIEAKLVEEKPKNKKGLNRS.

The active site involves Cys26.

The protein belongs to the peptidase C69 family.

The enzyme catalyses an L-aminoacyl-L-amino acid + H2O = 2 an L-alpha-amino acid. This chain is Probable dipeptidase B (pepDB), found in Streptococcus pyogenes serotype M18 (strain MGAS8232).